A 295-amino-acid chain; its full sequence is Cytidine deaminase (295 aa).

CMP/dCMP-type deaminase domains are found at residues 48 to 168 and 187 to 295; these read ADDE…FGPA and EETT…YLAI. 89-91 lines the substrate pocket; it reads NLE. Zn(2+) is bound at residue His-102. Catalysis depends on Glu-104, which acts as the Proton donor. Zn(2+) contacts are provided by Cys-129 and Cys-132.

It belongs to the cytidine and deoxycytidylate deaminase family. In terms of assembly, homodimer. Zn(2+) serves as cofactor.

The catalysed reaction is cytidine + H2O + H(+) = uridine + NH4(+). It catalyses the reaction 2'-deoxycytidine + H2O + H(+) = 2'-deoxyuridine + NH4(+). Its function is as follows. This enzyme scavenges exogenous and endogenous cytidine and 2'-deoxycytidine for UMP synthesis. The polypeptide is Cytidine deaminase (Vibrio atlanticus (strain LGP32) (Vibrio splendidus (strain Mel32))).